The primary structure comprises 368 residues: MWIKELELKHYRNYDHLLASFSSGLNVFIGNNAQGKTNFLEAIYFLSLTRSHRTRADKELIHFDHSTVSLTGKIQRISGTVDLEINLSDKGRVTKINALKQAKLSDYIGTMMVVLFAPEDLQLVKGAPSLRRKFIDIDLGQIKPVYLSELSHYNHVLKQRNSYLKSAQQIDAAFLAVLDEQLAGYGARVMEHRIDFINALEKEANTHHQAISNGLESLSLSYQSSVVFDKKTNIYQQFLHQLEKNHQKDFFRKNTSVGPHRDDLAFYINGMNANFASQGQHRSLILSLKMAEVSLMKALTGDNPILLLDDVMSELDNTRQTKLLETVIKENVQTFITTTSLDHLSQLPEGIHIFHVTKGTVQIDSDIH.

30-37 (GNNAQGKT) serves as a coordination point for ATP.

This sequence belongs to the RecF family.

It localises to the cytoplasm. In terms of biological role, the RecF protein is involved in DNA metabolism; it is required for DNA replication and normal SOS inducibility. RecF binds preferentially to single-stranded, linear DNA. It also seems to bind ATP. This Streptococcus pyogenes serotype M5 (strain Manfredo) protein is DNA replication and repair protein RecF.